The primary structure comprises 170 residues: 3-isopropylmalate dehydratase small subunit 1 (170 aa).

It belongs to the LeuD family. LeuD type 2 subfamily. In terms of assembly, heterodimer of LeuC and LeuD.

It catalyses the reaction (2R,3S)-3-isopropylmalate = (2S)-2-isopropylmalate. It participates in amino-acid biosynthesis; L-leucine biosynthesis; L-leucine from 3-methyl-2-oxobutanoate: step 2/4. Functionally, catalyzes the isomerization between 2-isopropylmalate and 3-isopropylmalate, via the formation of 2-isopropylmaleate. The sequence is that of 3-isopropylmalate dehydratase small subunit 1 (leuD1) from Methanopyrus kandleri (strain AV19 / DSM 6324 / JCM 9639 / NBRC 100938).